The primary structure comprises 177 residues: Large ribosomal subunit protein uL5 (177 aa).

This sequence belongs to the universal ribosomal protein uL5 family. As to quaternary structure, part of the 50S ribosomal subunit; part of the 5S rRNA/L5/L18/L25 subcomplex. Contacts the 5S rRNA and the P site tRNA. Forms a bridge to the 30S subunit in the 70S ribosome.

This is one of the proteins that bind and probably mediate the attachment of the 5S RNA into the large ribosomal subunit, where it forms part of the central protuberance. In the 70S ribosome it contacts protein S13 of the 30S subunit (bridge B1b), connecting the 2 subunits; this bridge is implicated in subunit movement. Contacts the P site tRNA; the 5S rRNA and some of its associated proteins might help stabilize positioning of ribosome-bound tRNAs. The polypeptide is Large ribosomal subunit protein uL5 (Ehrlichia ruminantium (strain Welgevonden)).